The chain runs to 376 residues: Chaperone protein DnaJ (376 aa).

Residues aspartate 5–glycine 70 enclose the J domain. Residues glycine 131–threonine 209 form a CR-type zinc finger. Zn(2+)-binding residues include cysteine 144, cysteine 147, cysteine 161, cysteine 164, cysteine 183, cysteine 186, cysteine 197, and cysteine 200. 4 CXXCXGXG motif repeats span residues cysteine 144 to glycine 151, cysteine 161 to glycine 168, cysteine 183 to glycine 190, and cysteine 197 to glycine 204.

This sequence belongs to the DnaJ family. In terms of assembly, homodimer. Requires Zn(2+) as cofactor.

It localises to the cytoplasm. Functionally, participates actively in the response to hyperosmotic and heat shock by preventing the aggregation of stress-denatured proteins and by disaggregating proteins, also in an autonomous, DnaK-independent fashion. Unfolded proteins bind initially to DnaJ; upon interaction with the DnaJ-bound protein, DnaK hydrolyzes its bound ATP, resulting in the formation of a stable complex. GrpE releases ADP from DnaK; ATP binding to DnaK triggers the release of the substrate protein, thus completing the reaction cycle. Several rounds of ATP-dependent interactions between DnaJ, DnaK and GrpE are required for fully efficient folding. Also involved, together with DnaK and GrpE, in the DNA replication of plasmids through activation of initiation proteins. This chain is Chaperone protein DnaJ, found in Tolumonas auensis (strain DSM 9187 / NBRC 110442 / TA 4).